A 199-amino-acid polypeptide reads, in one-letter code: Thymidylate kinase (199 aa).

ATP is bound at residue 7-14 (GTEGVGKT).

The protein belongs to the thymidylate kinase family.

It carries out the reaction dTMP + ATP = dTDP + ADP. Its function is as follows. Phosphorylation of dTMP to form dTDP in both de novo and salvage pathways of dTTP synthesis. In Acinetobacter baumannii (strain ACICU), this protein is Thymidylate kinase.